We begin with the raw amino-acid sequence, 203 residues long: Ribonuclease HII (203 aa).

Positions L15–E201 constitute an RNase H type-2 domain. A divalent metal cation is bound by residues D21, E22, and D111.

This sequence belongs to the RNase HII family. Requires Mn(2+) as cofactor. It depends on Mg(2+) as a cofactor.

The protein localises to the cytoplasm. It catalyses the reaction Endonucleolytic cleavage to 5'-phosphomonoester.. Its function is as follows. Endonuclease that specifically degrades the RNA of RNA-DNA hybrids. This chain is Ribonuclease HII, found in Thermus thermophilus (strain ATCC 27634 / DSM 579 / HB8).